Reading from the N-terminus, the 509-residue chain is Maturase K (509 aa).

Belongs to the intron maturase 2 family. MatK subfamily.

It is found in the plastid. The protein resides in the chloroplast. Its function is as follows. Usually encoded in the trnK tRNA gene intron. Probably assists in splicing its own and other chloroplast group II introns. This Hottonia palustris (Water-violet) protein is Maturase K.